We begin with the raw amino-acid sequence, 544 residues long: Chaperonin GroEL (544 aa).

ATP-binding positions include 30-33 (TLGP), Lys-51, 87-91 (DGTTT), Gly-415, and Asp-495.

Belongs to the chaperonin (HSP60) family. In terms of assembly, forms a cylinder of 14 subunits composed of two heptameric rings stacked back-to-back. Interacts with the co-chaperonin GroES.

It localises to the cytoplasm. The catalysed reaction is ATP + H2O + a folded polypeptide = ADP + phosphate + an unfolded polypeptide.. In terms of biological role, together with its co-chaperonin GroES, plays an essential role in assisting protein folding. The GroEL-GroES system forms a nano-cage that allows encapsulation of the non-native substrate proteins and provides a physical environment optimized to promote and accelerate protein folding. The protein is Chaperonin GroEL of Agrobacterium fabrum (strain C58 / ATCC 33970) (Agrobacterium tumefaciens (strain C58)).